A 419-amino-acid chain; its full sequence is Probable 3-isopropylmalate dehydratase large subunit (419 aa).

The [4Fe-4S] cluster site is built by cysteine 299, cysteine 359, and cysteine 362.

Belongs to the aconitase/IPM isomerase family. LeuC type 2 subfamily. In terms of assembly, heterodimer of LeuC and LeuD. The cofactor is [4Fe-4S] cluster.

It carries out the reaction (2R,3S)-3-isopropylmalate = (2S)-2-isopropylmalate. The protein operates within amino-acid biosynthesis; L-leucine biosynthesis; L-leucine from 3-methyl-2-oxobutanoate: step 2/4. In terms of biological role, catalyzes the isomerization between 2-isopropylmalate and 3-isopropylmalate, via the formation of 2-isopropylmaleate. The polypeptide is Probable 3-isopropylmalate dehydratase large subunit (Methanothermobacter thermautotrophicus (strain ATCC 29096 / DSM 1053 / JCM 10044 / NBRC 100330 / Delta H) (Methanobacterium thermoautotrophicum)).